The sequence spans 414 residues: 3-oxoacyl-[acyl-carrier-protein] synthase 2 (414 aa).

In terms of domain architecture, Ketosynthase family 3 (KS3) spans 3–413 (KRRVVVTGMG…GTNGSLIFKR (411 aa)). Active-site for beta-ketoacyl synthase activity residues include Cys164, His304, and His342.

It belongs to the thiolase-like superfamily. Beta-ketoacyl-ACP synthases family. In terms of assembly, homodimer.

The enzyme catalyses a fatty acyl-[ACP] + malonyl-[ACP] + H(+) = a 3-oxoacyl-[ACP] + holo-[ACP] + CO2. The catalysed reaction is (9Z)-hexadecenoyl-[ACP] + malonyl-[ACP] + H(+) = 3-oxo-(11Z)-octadecenoyl-[ACP] + holo-[ACP] + CO2. It functions in the pathway lipid metabolism; fatty acid biosynthesis. Functionally, involved in the type II fatty acid elongation cycle. Catalyzes the elongation of a wide range of acyl-ACP by the addition of two carbons from malonyl-ACP to an acyl acceptor. Can efficiently catalyze the conversion of palmitoleoyl-ACP (cis-hexadec-9-enoyl-ACP) to cis-vaccenoyl-ACP (cis-octadec-11-enoyl-ACP), an essential step in the thermal regulation of fatty acid composition. This Vibrio cholerae serotype O1 (strain ATCC 39315 / El Tor Inaba N16961) protein is 3-oxoacyl-[acyl-carrier-protein] synthase 2 (fabF).